The chain runs to 161 residues: 2-C-methyl-D-erythritol 2,4-cyclodiphosphate synthase (161 aa).

Asp11 and His13 together coordinate a divalent metal cation. Residues 11 to 13 (DIH) and 37 to 38 (HS) contribute to the 4-CDP-2-C-methyl-D-erythritol 2-phosphate site. His45 serves as a coordination point for a divalent metal cation. 4-CDP-2-C-methyl-D-erythritol 2-phosphate-binding positions include 59–61 (DIG), 135–138 (TTNE), and Arg145.

This sequence belongs to the IspF family. In terms of assembly, homotrimer. The cofactor is a divalent metal cation.

The enzyme catalyses 4-CDP-2-C-methyl-D-erythritol 2-phosphate = 2-C-methyl-D-erythritol 2,4-cyclic diphosphate + CMP. It participates in isoprenoid biosynthesis; isopentenyl diphosphate biosynthesis via DXP pathway; isopentenyl diphosphate from 1-deoxy-D-xylulose 5-phosphate: step 4/6. Functionally, involved in the biosynthesis of isopentenyl diphosphate (IPP) and dimethylallyl diphosphate (DMAPP), two major building blocks of isoprenoid compounds. Catalyzes the conversion of 4-diphosphocytidyl-2-C-methyl-D-erythritol 2-phosphate (CDP-ME2P) to 2-C-methyl-D-erythritol 2,4-cyclodiphosphate (ME-CPP) with a corresponding release of cytidine 5-monophosphate (CMP). This chain is 2-C-methyl-D-erythritol 2,4-cyclodiphosphate synthase, found in Cyanothece sp. (strain PCC 7425 / ATCC 29141).